The sequence spans 199 residues: uncharacterized protein (199 aa).

This is an uncharacterized protein from Rhodococcus erythropolis (Arthrobacter picolinophilus).